The chain runs to 210 residues: Cdc42 effector protein 2 (210 aa).

Position 2 is an N-acetylserine (Ser2). A CRIB domain is found at 30-44; the sequence is ISPPLGDFRHTIHIG. 3 positions are modified to phosphoserine: Ser31, Ser101, and Ser141. The tract at residues 122-171 is disordered; the sequence is PTAQAPPKPPRLHLETPQPSPQEGGSVDIWRIPETGSPNSGLTPESGAEE.

The protein belongs to the BORG/CEP family. In terms of assembly, interacts with RHOQ and CDC42 in a GTP-dependent manner, and with SEPT7. In terms of tissue distribution, highly expressed in the heart. Weakly expressed in the pancreas and liver.

The protein localises to the endomembrane system. The protein resides in the cytoplasm. It localises to the cytoskeleton. Its function is as follows. Probably involved in the organization of the actin cytoskeleton. May act downstream of CDC42 to induce actin filament assembly leading to cell shape changes. Induces pseudopodia formation in fibroblasts in a CDC42-dependent manner. This chain is Cdc42 effector protein 2 (CDC42EP2), found in Homo sapiens (Human).